A 340-amino-acid polypeptide reads, in one-letter code: NADH-quinone oxidoreductase subunit H 2 (340 aa).

8 helical membrane-spanning segments follow: residues 10–30, 84–104, 126–146, 172–192, 198–218, 255–275, 279–299, and 318–338; these read LIVAFGLIVFKVALLIAILLL, FLFKLAPILALAPPFVVFVAI, VALLFVFAVIGIEVFGVIFGG, MGFAVIGVVMLAQSMSLLDIV, VWNIVYQPVGFFVFFVAGLAE, VIVLLVSVLLVILFFGGWNGI, MPPLLWFLLKVAFFVYLFIWF, and VLLPLSMANIIITGVLLGAAA.

The protein belongs to the complex I subunit 1 family. As to quaternary structure, NDH-1 is composed of 14 different subunits. Subunits NuoA, H, J, K, L, M, N constitute the membrane sector of the complex.

Its subcellular location is the cell inner membrane. The enzyme catalyses a quinone + NADH + 5 H(+)(in) = a quinol + NAD(+) + 4 H(+)(out). Its function is as follows. NDH-1 shuttles electrons from NADH, via FMN and iron-sulfur (Fe-S) centers, to quinones in the respiratory chain. The immediate electron acceptor for the enzyme in this species is believed to be ubiquinone. Couples the redox reaction to proton translocation (for every two electrons transferred, four hydrogen ions are translocated across the cytoplasmic membrane), and thus conserves the redox energy in a proton gradient. This subunit may bind ubiquinone. In Rhizobium etli (strain ATCC 51251 / DSM 11541 / JCM 21823 / NBRC 15573 / CFN 42), this protein is NADH-quinone oxidoreductase subunit H 2.